A 1651-amino-acid chain; its full sequence is Roundabout homolog 1 (1651 aa).

The first 25 residues, 1–25 (MKWKHVPFLVMISLLSLSPNHLFLA), serve as a signal peptide directing secretion. At 26–897 (QLIPDPEDVE…QQISDVVKQP (872 aa)) the chain is on the extracellular side. Residues 33-57 (DVERGNDHGTPIPTSDNDDNSLGYT) form a disordered region. Positions 44–56 (IPTSDNDDNSLGY) are enriched in polar residues. Ig-like C2-type domains follow at residues 68–164 (PRIV…ASLE), 170–257 (DDFR…AELT), 262–346 (PSFV…ATLT), 351–446 (PHFV…LEVT), and 455–541 (PVIR…AYIE). Cysteines 89 and 147 form a disulfide. Asparagine 160 is a glycosylation site (N-linked (GlcNAc...) asparagine). 3 cysteine pairs are disulfide-bonded: cysteine 191/cysteine 240, cysteine 283/cysteine 330, and cysteine 372/cysteine 428. Asparagine 463 carries an N-linked (GlcNAc...) asparagine glycan. The cysteines at positions 476 and 525 are disulfide-linked. Fibronectin type-III domains lie at 563–657 (APSK…TQDV), 676–773 (AVLH…TLEE), and 778–874 (PPQG…LDAH). Residues asparagine 790, asparagine 820, and asparagine 827 are each glycosylated (N-linked (GlcNAc...) asparagine). A helical membrane pass occupies residues 898–918 (AFIAGIGAACWIILMVFSIWL). The Cytoplasmic portion of the chain corresponds to 919 to 1651 (YRHRKKRNGL…NNEELEETES (733 aa)). A Phosphoserine modification is found at serine 940. At threonine 948 the chain carries Phosphothreonine. Phosphotyrosine; by ABL; in vitro is present on tyrosine 1038. Residue serine 1055 is modified to Phosphoserine. Phosphotyrosine; by ABL; in vitro is present on residues tyrosine 1073 and tyrosine 1114. Disordered stretches follow at residues 1124–1202 (KDYR…SEEY), 1224–1337 (YLQQ…ADME), 1352–1397 (EQTP…DGSF), and 1420–1651 (RRQM…ETES). Residues 1137–1146 (PYNQSYDQNT) show a composition bias toward polar residues. The span at 1147–1163 (GGSYNSSDRGSSTSGSQ) shows a compositional bias: low complexity. Pro residues predominate over residues 1186–1196 (LPPPPAHPPPH). Threonine 1240 carries the post-translational modification Phosphothreonine. Positions 1255–1269 (YSHQSTATLTPSPQE) are enriched in polar residues. The segment covering 1281 to 1293 (ETGHMQHQPDRRR) has biased composition (basic and acidic residues). Pro residues predominate over residues 1296-1307 (VSPPPPPRPISP). The residue at position 1297 (serine 1297) is a Phosphoserine. The segment covering 1322–1336 (MDTDAPEEEEDEADM) has biased composition (acidic residues). Residues 1384–1397 (SSGRSSVSSSDGSF) are compositionally biased toward low complexity. Polar residues predominate over residues 1438-1451 (PRPTSPVSTDSNMS). Residues 1459–1470 (RPAKKLKHQPGH) show a composition bias toward basic residues. Over residues 1480-1490 (LPPPPVPPPAI) the composition is skewed to pro residues. Composition is skewed to basic and acidic residues over residues 1516–1541 (ARTD…RQVV) and 1549–1573 (DPRE…RDLP). Polar residues predominate over residues 1592–1601 (FPTSNNPRDP). Positions 1602 to 1614 (SSSSSMSSRGSGS) are enriched in low complexity. The segment covering 1642-1651 (NNEELEETES) has biased composition (acidic residues).

The protein belongs to the immunoglobulin superfamily. ROBO family. Homodimer. Dimerization is mediated by the extracellular domain and is independent of SLIT liganding. Interacts with SLIT1. Interacts with SLIT2. Interacts with FLRT3. Interacts with MYO9B (via Rho-GAP domain). Post-translationally, ubiquitinated. May be deubiquitinated by USP33. As to expression, widely expressed, with exception of kidney.

The protein localises to the cell membrane. It is found in the cell projection. The protein resides in the axon. Its subcellular location is the endoplasmic reticulum-Golgi intermediate compartment membrane. Its function is as follows. Receptor for SLIT1 and SLIT2 that mediates cellular responses to molecular guidance cues in cellular migration, including axonal navigation at the ventral midline of the neural tube and projection of axons to different regions during neuronal development. Interaction with the intracellular domain of FLRT3 mediates axon attraction towards cells expressing NTN1. In axon growth cones, the silencing of the attractive effect of NTN1 by SLIT2 may require the formation of a ROBO1-DCC complex. Plays a role in the regulation of cell migration via its interaction with MYO9B; inhibits MYO9B-mediated stimulation of RHOA GTPase activity, and thereby leads to increased levels of active, GTP-bound RHOA. May be required for lung development. The polypeptide is Roundabout homolog 1 (ROBO1) (Homo sapiens (Human)).